Consider the following 209-residue polypeptide: Thiamine-phosphate synthase (209 aa).

Residues 41-45 (QYRNK) and N73 contribute to the 4-amino-2-methyl-5-(diphosphooxymethyl)pyrimidine site. D74 and D93 together coordinate Mg(2+). A 4-amino-2-methyl-5-(diphosphooxymethyl)pyrimidine-binding site is contributed by S112. 2-[(2R,5Z)-2-carboxy-4-methylthiazol-5(2H)-ylidene]ethyl phosphate is bound at residue 139–141 (SST). K142 provides a ligand contact to 4-amino-2-methyl-5-(diphosphooxymethyl)pyrimidine. Residue G168 participates in 2-[(2R,5Z)-2-carboxy-4-methylthiazol-5(2H)-ylidene]ethyl phosphate binding.

The protein belongs to the thiamine-phosphate synthase family. Mg(2+) serves as cofactor.

The catalysed reaction is 2-[(2R,5Z)-2-carboxy-4-methylthiazol-5(2H)-ylidene]ethyl phosphate + 4-amino-2-methyl-5-(diphosphooxymethyl)pyrimidine + 2 H(+) = thiamine phosphate + CO2 + diphosphate. It catalyses the reaction 2-(2-carboxy-4-methylthiazol-5-yl)ethyl phosphate + 4-amino-2-methyl-5-(diphosphooxymethyl)pyrimidine + 2 H(+) = thiamine phosphate + CO2 + diphosphate. It carries out the reaction 4-methyl-5-(2-phosphooxyethyl)-thiazole + 4-amino-2-methyl-5-(diphosphooxymethyl)pyrimidine + H(+) = thiamine phosphate + diphosphate. It functions in the pathway cofactor biosynthesis; thiamine diphosphate biosynthesis; thiamine phosphate from 4-amino-2-methyl-5-diphosphomethylpyrimidine and 4-methyl-5-(2-phosphoethyl)-thiazole: step 1/1. Functionally, condenses 4-methyl-5-(beta-hydroxyethyl)thiazole monophosphate (THZ-P) and 2-methyl-4-amino-5-hydroxymethyl pyrimidine pyrophosphate (HMP-PP) to form thiamine monophosphate (TMP). The sequence is that of Thiamine-phosphate synthase from Methylobacillus flagellatus (strain ATCC 51484 / DSM 6875 / VKM B-1610 / KT).